Reading from the N-terminus, the 204-residue chain is Ribosome maturation factor RimM (204 aa).

The PRC barrel domain occupies 117-192 (DEDEFFSADL…EVTIDPPDDL (76 aa)).

This sequence belongs to the RimM family. Binds ribosomal protein uS19.

The protein resides in the cytoplasm. Its function is as follows. An accessory protein needed during the final step in the assembly of 30S ribosomal subunit, possibly for assembly of the head region. Essential for efficient processing of 16S rRNA. May be needed both before and after RbfA during the maturation of 16S rRNA. It has affinity for free ribosomal 30S subunits but not for 70S ribosomes. In Methylobacterium nodulans (strain LMG 21967 / CNCM I-2342 / ORS 2060), this protein is Ribosome maturation factor RimM.